Reading from the N-terminus, the 869-residue chain is Alanine--tRNA ligase (869 aa).

Zn(2+) contacts are provided by H559, H563, C660, and H664.

This sequence belongs to the class-II aminoacyl-tRNA synthetase family. Zn(2+) serves as cofactor.

It localises to the cytoplasm. It catalyses the reaction tRNA(Ala) + L-alanine + ATP = L-alanyl-tRNA(Ala) + AMP + diphosphate. Catalyzes the attachment of alanine to tRNA(Ala) in a two-step reaction: alanine is first activated by ATP to form Ala-AMP and then transferred to the acceptor end of tRNA(Ala). Also edits incorrectly charged Ser-tRNA(Ala) and Gly-tRNA(Ala) via its editing domain. This is Alanine--tRNA ligase from Herminiimonas arsenicoxydans.